A 160-amino-acid polypeptide reads, in one-letter code: MGVSKKPDLNDPVLRAKLAKGMGHNYYGEPAWPNDLLYIFPVVILGTIACNVGLAVLEPSMIGEPADPFATPLEILPEWYFFPVFQILRTVPNKLLGVLLMVSVPTGLLTVPFLENVNKFQNPFRRPVATTVFLIGTAVALWLGIGATLPIEKSLTLGLF.

3 consecutive transmembrane segments (helical) span residues 36 to 56, 95 to 115, and 131 to 151; these read LLYIFPVVILGTIACNVGLAV, LLGVLLMVSVPTGLLTVPFLE, and TVFLIGTAVALWLGIGATLPI.

This sequence belongs to the cytochrome b family. PetD subfamily. The 4 large subunits of the cytochrome b6-f complex are cytochrome b6, subunit IV (17 kDa polypeptide, petD), cytochrome f and the Rieske protein, while the 4 small subunits are petG, petL, petM and petN. The complex functions as a dimer.

It localises to the plastid. Its subcellular location is the chloroplast thylakoid membrane. Its function is as follows. Component of the cytochrome b6-f complex, which mediates electron transfer between photosystem II (PSII) and photosystem I (PSI), cyclic electron flow around PSI, and state transitions. The polypeptide is Cytochrome b6-f complex subunit 4 (Oryza nivara (Indian wild rice)).